Consider the following 78-residue polypeptide: Large ribosomal subunit protein bL28 (78 aa).

Belongs to the bacterial ribosomal protein bL28 family.

The polypeptide is Large ribosomal subunit protein bL28 (Pectobacterium atrosepticum (strain SCRI 1043 / ATCC BAA-672) (Erwinia carotovora subsp. atroseptica)).